We begin with the raw amino-acid sequence, 319 residues long: DNA-directed RNA polymerases IV and V subunit 3B (319 aa).

M1 bears the N-acetylmethionine mark.

This sequence belongs to the archaeal Rpo3/eukaryotic RPB3 RNA polymerase subunit family. As to quaternary structure, component of the RNA polymerase IV and V complexes. Interacts with NRPB11, SHH1, GRP23 and NRPD1.

The protein resides in the nucleus. Its function is as follows. DNA-dependent RNA polymerase catalyzes the transcription of DNA into RNA using the four ribonucleoside triphosphates as substrates. Component of RNA polymerases IV and V which mediate short-interfering RNAs (siRNA) accumulation and subsequent RNA-directed DNA methylation-dependent (RdDM) transcriptional gene silencing (TGS) of endogenous repeated sequences, including transposable elements. In Arabidopsis thaliana (Mouse-ear cress), this protein is DNA-directed RNA polymerases IV and V subunit 3B (NRPD3B).